Reading from the N-terminus, the 148-residue chain is Glutamyl-tRNA(Gln) amidotransferase subunit C, mitochondrial (148 aa).

This sequence belongs to the GatC family. Subunit of the heterotrimeric GatCAB amidotransferase (AdT) complex, composed of A, B and C subunits.

It localises to the mitochondrion. The enzyme catalyses L-glutamyl-tRNA(Gln) + L-glutamine + ATP + H2O = L-glutaminyl-tRNA(Gln) + L-glutamate + ADP + phosphate + H(+). Its function is as follows. Allows the formation of correctly charged Gln-tRNA(Gln) through the transamidation of misacylated Glu-tRNA(Gln) in the mitochondria. The reaction takes place in the presence of glutamine and ATP through an activated gamma-phospho-Glu-tRNA(Gln). This Drosophila melanogaster (Fruit fly) protein is Glutamyl-tRNA(Gln) amidotransferase subunit C, mitochondrial.